We begin with the raw amino-acid sequence, 299 residues long: Probable tyrosine phosphatase protein J4 (299 aa).

In terms of domain architecture, Tyrosine-protein phosphatase spans 16–289 (VEALDFLSFM…VYCYQALYVW (274 aa)). Catalysis depends on Cys-230, which acts as the Phosphocysteine intermediate.

The protein belongs to the protein-tyrosine phosphatase family.

It catalyses the reaction O-phospho-L-tyrosyl-[protein] + H2O = L-tyrosyl-[protein] + phosphate. The sequence is that of Probable tyrosine phosphatase protein J4 (J5) from Microplitis demolitor bracovirus (isolate Webb) (MdBV).